Consider the following 940-residue polypeptide: MKSNLRYGIRKHKLGAASVFLGTMIVVGMGQEKEAAASEQNNTTVEESGSSATESKASETQTTTNNVNTIDETQSYSATSTEQPSQSTQVTTEEAPKTVQAPKVETSRVDLPSEKVADKETTGTQVDIAQPSNVSEIKPRMKRSTDVTAVAEKEVVEETKATGTDVTNKVEVEEGSEIVGHKQDTNVVNPHNAERVTLKYKWKFGEGIKAGDYFDFTLSDNVETHGISTLRKVPEIKSTDGQVMATGEIIGERKVRYTFKEYVQEKKDLTAELSLNLFIDPTTVTQKGNQNVEVKLGETTVSKIFNIQYLGGVRDNWGVTANGRIDTLNKVDGKFSHFAYMKPNNQSLSSVTVTGQVTKGNKPGVNNPTVKVYKHIGSDDLAESVYAKLDDVSKFEDVTDNMSLDFDTNGGYSLNFNNLDQSKNYVIKYEGYYDSNASNLEFQTHLFGYYNYYYTSNLTWKNGVAFYSNNAQGDGKDKLKEPIIEHSTPIELEFKSEPPVEKHELTGTIEESNDSKPIDFEYHTAVEGAEGHAEGTIETEEDSIHVDFEESTHENSKHHADVVEYEEDTNPGGGQVTTESNLVEFDEDSTKGIVTGAVSDHTTIEDTKEYTTESNLIELVDELPEEHGQAQGPIEEITENNHHISHSGLGTENGHGNYGVIEEIEENSHVDIKSELGYEGGQNSGNQSFEEDTEEDKPKYEQGGNIVDIDFDSVPQIHGQNNGNQSFEEDTEKDKPKYEQGGNIIDIDFDSVPHIHGFNKHTEIIEEDTNKDKPNYQFGGHNSVDFEEDTLPQVSGHNEGQQTIEEDTTPPIVPPTPPTPEVPSEPETPTPPTPEVPSEPETPTPPTPEVPTEPGKPIPPAKEEPKKPSKPVEQGKVVTPVIEINEKVKAVVPTKKAQSKKSELPETGGEESTNNGMLFGGLFSILGLALLRRNKKNHKA.

A signal peptide spans Met-1 to Ala-36. Residues Ala-36–Leu-111 are disordered. Residues Ser-38 to Thr-92 show a composition bias toward polar residues. A fibrinogen/elastin/tropoelastin-binding region spans residues Thr-162–Lys-480. 3 disordered regions span residues Leu-676–Asp-746, Ile-764–Val-878, and Val-892–Leu-918. One copy of the D-1 repeat lies at Gly-681 to His-718. The D-2 repeat unit spans residues Gly-719 to His-756. The D-3 repeat unit spans residues Gly-757 to Ser-795. Residues Ile-764–Pro-774 are compositionally biased toward basic and acidic residues. The span at Pro-792–Gln-802 shows a compositional bias: polar residues. The D-4; truncated repeat unit spans residues Gly-796–Pro-814. The segment covering Pro-811 to Pro-860 has biased composition (pro residues). 3 WR repeats span residues Pro-815–Thr-828, Pro-829–Thr-842, and Pro-857–Lys-870. The LPXTG sorting signal motif lies at Leu-904 to Gly-908. Residue Thr-907 is modified to Pentaglycyl murein peptidoglycan amidated threonine. Positions Gly-908 to Ala-940 are cleaved as a propeptide — removed by sortase.

Interacts with host PLG; this interaction provides active plasmin on the surface of bacteria cells. Interacts with host histones.

The protein resides in the secreted. It is found in the cell wall. Its function is as follows. Multifunctional protein which promotes bacterial attachment to fibrinogen, elastin and fibronectin. Also promotes the accumulation phase and the primary attachment phase of biofilm formation. In addition, protects against the antimicrobial activity of histones. Mechanistically, captures histones and prevents them from reaching the bacterial membrane and simultaneously binds plasminogen, thereby promoting its conversion to plasmin to destroy the bound histones. The sequence is that of Fibronectin-binding protein B from Staphylococcus aureus (strain USA300).